Here is a 739-residue protein sequence, read N- to C-terminus: Trehalose phosphorylase (739 aa).

The propeptide occupies 1 to 26 (MSTPHHQFESKSSTAIRRRLSSSVSS). A disordered region spans residues 1-28 (MSTPHHQFESKSSTAIRRRLSSSVSSKQ).

The protein belongs to the glycosyltransferase group 1 family. Glycosyltransferase 4 subfamily. Homodimer.

The catalysed reaction is alpha,alpha-trehalose + phosphate = alpha-D-glucose + alpha-D-glucose 1-phosphate. Reversibly catalyzes the synthesis and degradation of trehalose from glucose and alpha-D-glucose 1-phosphate. The equilibrium lies in the direction of trehalose synthesis. The chain is Trehalose phosphorylase from Pleurotus pulmonarius (Indian oyster mushroom).